The primary structure comprises 313 residues: Glucan 1,3-beta-glucosidase (313 aa).

The signal sequence occupies residues 1–23 (MRFSTTLATAATALFFTASQVSA). E124 serves as the catalytic Proton donor. N-linked (GlcNAc...) asparagine glycosylation occurs at N202. E233 acts as the Nucleophile in catalysis. A glycan (N-linked (GlcNAc...) asparagine) is linked at N284.

Belongs to the glycosyl hydrolase 17 family.

It localises to the secreted. Its subcellular location is the cell wall. The catalysed reaction is Successive hydrolysis of beta-D-glucose units from the non-reducing ends of (1-&gt;3)-beta-D-glucans, releasing alpha-glucose.. Its function is as follows. Glucanases possibly play a role in cell expansion during growth, in cell-cell fusion during mating, and in spore release during sporulation. This enzyme may be involved in beta-glucan degradation and also function biosynthetically as a transglycosylase. The sequence is that of Glucan 1,3-beta-glucosidase (BGL2) from Saccharomyces cerevisiae (strain ATCC 204508 / S288c) (Baker's yeast).